The primary structure comprises 65 residues: Large ribosomal subunit protein bL33c (65 aa).

It belongs to the bacterial ribosomal protein bL33 family.

The protein resides in the plastid. Its subcellular location is the chloroplast. In Chara vulgaris (Common stonewort), this protein is Large ribosomal subunit protein bL33c.